Here is a 536-residue protein sequence, read N- to C-terminus: Phosphoenolpyruvate carboxykinase (ATP) (536 aa).

Positions 61, 195, and 201 each coordinate substrate. Residues K201, H220, and 236 to 244 contribute to the ATP site; that span reads GLSGTGKTT. Mn(2+) is bound by residues K201 and H220. A Mn(2+)-binding site is contributed by D257. E285, R322, and T447 together coordinate ATP. R322 contacts substrate.

Belongs to the phosphoenolpyruvate carboxykinase (ATP) family. The cofactor is Mn(2+).

It localises to the cytoplasm. The catalysed reaction is oxaloacetate + ATP = phosphoenolpyruvate + ADP + CO2. Its pathway is carbohydrate biosynthesis; gluconeogenesis. Its function is as follows. Involved in the gluconeogenesis. Catalyzes the conversion of oxaloacetate (OAA) to phosphoenolpyruvate (PEP) through direct phosphoryl transfer between the nucleoside triphosphate and OAA. The protein is Phosphoenolpyruvate carboxykinase (ATP) of Sinorhizobium fredii (strain NBRC 101917 / NGR234).